The sequence spans 328 residues: uncharacterized protein (328 aa).

The SIS domain occupies 37–179 (LTERLLCHQG…AMTVLRCRKI (143 aa)). Position 52–57 (52–57 (GIGKSG)) interacts with ATP. CBS domains are found at residues 205-264 (LSPR…GGAI) and 273-328 (MTRK…AGLL).

This sequence belongs to the SIS family. GutQ/KpsF subfamily.

This is an uncharacterized protein from Chlamydia muridarum (strain MoPn / Nigg).